The chain runs to 222 residues: UPF0758 protein Cpar_0627 (222 aa).

Residues 100-222 form the MPN domain; that stretch reads KIQGAQDVFE…WFSFRDHSLL (123 aa). Positions 171, 173, and 184 each coordinate Zn(2+). A JAMM motif motif is present at residues 171–184; it reads HNHPSGDVQPSNAD.

This sequence belongs to the UPF0758 family.

This chain is UPF0758 protein Cpar_0627, found in Chlorobaculum parvum (strain DSM 263 / NCIMB 8327) (Chlorobium vibrioforme subsp. thiosulfatophilum).